Reading from the N-terminus, the 560-residue chain is Dihydroxy-acid dehydratase (560 aa).

Aspartate 78 contributes to the Mg(2+) binding site. A [2Fe-2S] cluster-binding site is contributed by cysteine 119. Positions 120 and 121 each coordinate Mg(2+). Position 121 is an N6-carboxylysine (lysine 121). Cysteine 192 is a [2Fe-2S] cluster binding site. Glutamate 446 is a binding site for Mg(2+). The Proton acceptor role is filled by serine 472.

This sequence belongs to the IlvD/Edd family. Homodimer. [2Fe-2S] cluster is required as a cofactor. The cofactor is Mg(2+).

It catalyses the reaction (2R)-2,3-dihydroxy-3-methylbutanoate = 3-methyl-2-oxobutanoate + H2O. The enzyme catalyses (2R,3R)-2,3-dihydroxy-3-methylpentanoate = (S)-3-methyl-2-oxopentanoate + H2O. The protein operates within amino-acid biosynthesis; L-isoleucine biosynthesis; L-isoleucine from 2-oxobutanoate: step 3/4. It participates in amino-acid biosynthesis; L-valine biosynthesis; L-valine from pyruvate: step 3/4. Functions in the biosynthesis of branched-chain amino acids. Catalyzes the dehydration of (2R,3R)-2,3-dihydroxy-3-methylpentanoate (2,3-dihydroxy-3-methylvalerate) into 2-oxo-3-methylpentanoate (2-oxo-3-methylvalerate) and of (2R)-2,3-dihydroxy-3-methylbutanoate (2,3-dihydroxyisovalerate) into 2-oxo-3-methylbutanoate (2-oxoisovalerate), the penultimate precursor to L-isoleucine and L-valine, respectively. The protein is Dihydroxy-acid dehydratase of Anaeromyxobacter dehalogenans (strain 2CP-1 / ATCC BAA-258).